The chain runs to 294 residues: 4-hydroxy-tetrahydrodipicolinate synthase (294 aa).

Position 45 (threonine 45) interacts with pyruvate. Tyrosine 133 acts as the Proton donor/acceptor in catalysis. Lysine 161 functions as the Schiff-base intermediate with substrate in the catalytic mechanism. Isoleucine 203 serves as a coordination point for pyruvate.

It belongs to the DapA family. Homotetramer; dimer of dimers.

Its subcellular location is the cytoplasm. The enzyme catalyses L-aspartate 4-semialdehyde + pyruvate = (2S,4S)-4-hydroxy-2,3,4,5-tetrahydrodipicolinate + H2O + H(+). It participates in amino-acid biosynthesis; L-lysine biosynthesis via DAP pathway; (S)-tetrahydrodipicolinate from L-aspartate: step 3/4. Functionally, catalyzes the condensation of (S)-aspartate-beta-semialdehyde [(S)-ASA] and pyruvate to 4-hydroxy-tetrahydrodipicolinate (HTPA). The chain is 4-hydroxy-tetrahydrodipicolinate synthase from Shewanella sp. (strain MR-4).